Reading from the N-terminus, the 411-residue chain is Anaerobic sulfatase-maturating enzyme homolog AslB (411 aa).

A Radical SAM core domain is found at 3–250; that stretch reads QQVPTRAFHV…LVAIFDHWIK (248 aa). Residues cysteine 21 and cysteine 25 each contribute to the [4Fe-4S] cluster site. An S-adenosyl-L-methionine-binding site is contributed by tyrosine 27. A [4Fe-4S] cluster-binding site is contributed by cysteine 28. S-adenosyl-L-methionine-binding residues include glycine 74, serine 129, and arginine 141. The [4Fe-4S] cluster site is built by cysteine 276, cysteine 282, and cysteine 297. The active-site Proton acceptor is aspartate 298. [4Fe-4S] cluster is bound by residues cysteine 339, cysteine 342, cysteine 348, cysteine 352, and cysteine 371.

It belongs to the radical SAM superfamily. Anaerobic sulfatase-maturating enzyme family. The cofactor is [4Fe-4S] cluster.

This is Anaerobic sulfatase-maturating enzyme homolog AslB (aslB) from Escherichia coli (strain K12).